The following is a 184-amino-acid chain: Trypsin/chymotrypsin inhibitor (184 aa).

2 cysteine pairs are disulfide-bonded: C39-C84 and C136-C147.

Belongs to the protease inhibitor I3 (leguminous Kunitz-type inhibitor) family. Homodimer.

Inhibits trypsin and alpha-chymotrypsin. This Alocasia macrorrhizos (Giant taro) protein is Trypsin/chymotrypsin inhibitor.